The primary structure comprises 233 residues: UPF0502 protein Mpe_A1449 (233 aa).

It belongs to the UPF0502 family.

This Methylibium petroleiphilum (strain ATCC BAA-1232 / LMG 22953 / PM1) protein is UPF0502 protein Mpe_A1449.